We begin with the raw amino-acid sequence, 310 residues long: Methionyl-tRNA formyltransferase (310 aa).

S111–P114 contributes to the (6S)-5,6,7,8-tetrahydrofolate binding site.

Belongs to the Fmt family.

The enzyme catalyses L-methionyl-tRNA(fMet) + (6R)-10-formyltetrahydrofolate = N-formyl-L-methionyl-tRNA(fMet) + (6S)-5,6,7,8-tetrahydrofolate + H(+). Attaches a formyl group to the free amino group of methionyl-tRNA(fMet). The formyl group appears to play a dual role in the initiator identity of N-formylmethionyl-tRNA by promoting its recognition by IF2 and preventing the misappropriation of this tRNA by the elongation apparatus. In Rhodopseudomonas palustris (strain BisB18), this protein is Methionyl-tRNA formyltransferase.